We begin with the raw amino-acid sequence, 607 residues long: Elongation factor 4 (607 aa).

Residues 11 to 193 (EKIRNFSIIA…QIVEKVPAPT (183 aa)) form the tr-type G domain. GTP-binding positions include 23-28 (DHGKST) and 140-143 (NKID).

Belongs to the TRAFAC class translation factor GTPase superfamily. Classic translation factor GTPase family. LepA subfamily.

The protein localises to the cell membrane. The catalysed reaction is GTP + H2O = GDP + phosphate + H(+). Functionally, required for accurate and efficient protein synthesis under certain stress conditions. May act as a fidelity factor of the translation reaction, by catalyzing a one-codon backward translocation of tRNAs on improperly translocated ribosomes. Back-translocation proceeds from a post-translocation (POST) complex to a pre-translocation (PRE) complex, thus giving elongation factor G a second chance to translocate the tRNAs correctly. Binds to ribosomes in a GTP-dependent manner. This Streptococcus gordonii (strain Challis / ATCC 35105 / BCRC 15272 / CH1 / DL1 / V288) protein is Elongation factor 4.